A 180-amino-acid polypeptide reads, in one-letter code: UPF0227 protein YpsIP31758_1593 (180 aa).

This sequence belongs to the UPF0227 family.

The sequence is that of UPF0227 protein YpsIP31758_1593 from Yersinia pseudotuberculosis serotype O:1b (strain IP 31758).